The chain runs to 158 residues: 18.1 kDa class I heat shock protein (158 aa).

Positions 44 to 158 (ENPAFVSTRV…AEVKSIEISG (115 aa)) constitute a sHSP domain.

It belongs to the small heat shock protein (HSP20) family. Forms oligomeric structures.

It is found in the cytoplasm. The sequence is that of 18.1 kDa class I heat shock protein (HSP18.1) from Pisum sativum (Garden pea).